Consider the following 571-residue polypeptide: MGDEIVPPANQLAADNLENDGSTVQKAQFSDRVLIRSILGGGAKLAGQKVRIGGWVKTGRQQGKGTFAFLEVNDGSCPANLQVMVDSSLYDLSRLVATGTCVTVDGVLKIPPEGKGLKQSIELSVETVIAVGTVDPTTYPLPKTKLTPEFLRDVLHLRSRTNLISAVARIRNALAFATHSFFQEHSFLYIHTPIITTSDCEGAGEMFQVTTLINHTERVEQDLIDNPPPTEADVEAARLIVKERGEAVAQLKVAKASKEEITASVAQLSVAKASLAHVEERLRLKPGLPKNDGKIDYSNDFFGRQAFLTVSGQLQVETYACALSSVYTFGPTFRAENSHTSRHLAEFWMVEPEIAFADIHDDMNCAEAYVKYMCKWLMDKCGDDMELMDKNVDEGCTKRLNMVAKASFKRVTYTEAIERLEKAVAQGKVVFDNKVEWGIDLASEHERYLTEVEFDQKPIIVYNYPKGIKAFYMRLNDDEKTVAAMDVLVPKVGELIGGSQREERYDVIKQRIEEMGLPMEPYEWYLDLRRYGTVKHCGFGLGFERMIQFATGIDNIRDVIPFPRYPGKADL.

At G2 the chain carries N-acetylglycine. Positions 50-128 form a DNA-binding region, OB; it reads VRIGGWVKTG…QSIELSVETV (79 aa). In terms of domain architecture, WHEP-TRS spans 233-289; the sequence is DVEAARLIVKERGEAVAQLKVAKASKEEITASVAQLSVAKASLAHVEERLRLKPGLP.

The protein belongs to the class-II aminoacyl-tRNA synthetase family.

Its subcellular location is the cytoplasm. It is found in the cytosol. It carries out the reaction tRNA(Asn) + L-asparagine + ATP = L-asparaginyl-tRNA(Asn) + AMP + diphosphate + H(+). This is Asparagine--tRNA ligase, cytoplasmic 3 from Arabidopsis thaliana (Mouse-ear cress).